A 206-amino-acid polypeptide reads, in one-letter code: Large ribosomal subunit protein uL3 (206 aa).

The segment at Ser127 to Ala151 is disordered.

It belongs to the universal ribosomal protein uL3 family. In terms of assembly, part of the 50S ribosomal subunit. Forms a cluster with proteins L14 and L19.

In terms of biological role, one of the primary rRNA binding proteins, it binds directly near the 3'-end of the 23S rRNA, where it nucleates assembly of the 50S subunit. The sequence is that of Large ribosomal subunit protein uL3 from Borrelia garinii subsp. bavariensis (strain ATCC BAA-2496 / DSM 23469 / PBi) (Borreliella bavariensis).